Here is a 147-residue protein sequence, read N- to C-terminus: D-aminoacyl-tRNA deacylase (147 aa).

The Gly-cisPro motif, important for rejection of L-amino acids motif lies at 137–138 (GP).

This sequence belongs to the DTD family. As to quaternary structure, homodimer.

It is found in the cytoplasm. The catalysed reaction is glycyl-tRNA(Ala) + H2O = tRNA(Ala) + glycine + H(+). The enzyme catalyses a D-aminoacyl-tRNA + H2O = a tRNA + a D-alpha-amino acid + H(+). In terms of biological role, an aminoacyl-tRNA editing enzyme that deacylates mischarged D-aminoacyl-tRNAs. Also deacylates mischarged glycyl-tRNA(Ala), protecting cells against glycine mischarging by AlaRS. Acts via tRNA-based rather than protein-based catalysis; rejects L-amino acids rather than detecting D-amino acids in the active site. By recycling D-aminoacyl-tRNA to D-amino acids and free tRNA molecules, this enzyme counteracts the toxicity associated with the formation of D-aminoacyl-tRNA entities in vivo and helps enforce protein L-homochirality. The polypeptide is D-aminoacyl-tRNA deacylase (Levilactobacillus brevis (strain ATCC 367 / BCRC 12310 / CIP 105137 / JCM 1170 / LMG 11437 / NCIMB 947 / NCTC 947) (Lactobacillus brevis)).